Consider the following 66-residue polypeptide: Large ribosomal subunit protein bL31 (66 aa).

Residues C16, C18, C36, and C39 each contribute to the Zn(2+) site.

Belongs to the bacterial ribosomal protein bL31 family. Type A subfamily. As to quaternary structure, part of the 50S ribosomal subunit. Zn(2+) serves as cofactor.

Binds the 23S rRNA. In Geobacillus kaustophilus (strain HTA426), this protein is Large ribosomal subunit protein bL31.